A 190-amino-acid polypeptide reads, in one-letter code: Potassium-transporting ATPase KdpC subunit (190 aa).

A helical transmembrane segment spans residues 10–30 (TFIFLLLITGGVYPLLTTVLG).

This sequence belongs to the KdpC family. In terms of assembly, the system is composed of three essential subunits: KdpA, KdpB and KdpC.

It is found in the cell inner membrane. Its function is as follows. Part of the high-affinity ATP-driven potassium transport (or Kdp) system, which catalyzes the hydrolysis of ATP coupled with the electrogenic transport of potassium into the cytoplasm. This subunit acts as a catalytic chaperone that increases the ATP-binding affinity of the ATP-hydrolyzing subunit KdpB by the formation of a transient KdpB/KdpC/ATP ternary complex. This chain is Potassium-transporting ATPase KdpC subunit, found in Shigella dysenteriae serotype 1 (strain Sd197).